A 65-amino-acid chain; its full sequence is Cell death protein rpr (65 aa).

Interacts with Diap2 (via BIR2 domain).

Its function is as follows. Activator of apoptosis, as well as grim and hid, that acts on the effector Dredd. This Drosophila melanogaster (Fruit fly) protein is Cell death protein rpr (rpr).